The sequence spans 330 residues: D-alanine--D-alanine ligase (330 aa).

In terms of domain architecture, ATP-grasp spans 120-326; that stretch reads KLWLSALDIP…FKQFLEGIIR (207 aa). Residue 150-205 participates in ATP binding; sequence AFRNWGAVFVKAASQGSSVGCYKVTDAAKLSEAVNAAFGYSDQVLVEKAVRPRELE. Positions 280, 293, and 295 each coordinate Mg(2+).

This sequence belongs to the D-alanine--D-alanine ligase family. It depends on Mg(2+) as a cofactor. Mn(2+) serves as cofactor.

It is found in the cytoplasm. It catalyses the reaction 2 D-alanine + ATP = D-alanyl-D-alanine + ADP + phosphate + H(+). It functions in the pathway cell wall biogenesis; peptidoglycan biosynthesis. Cell wall formation. In Tolumonas auensis (strain DSM 9187 / NBRC 110442 / TA 4), this protein is D-alanine--D-alanine ligase.